A 230-amino-acid polypeptide reads, in one-letter code: Acyl-protein thioesterase 1 (230 aa).

Active-site charge relay system residues include serine 119, aspartate 174, and histidine 208. Position 224 is an N6-acetyllysine (lysine 224).

Belongs to the AB hydrolase superfamily. AB hydrolase 2 family. Homodimer.

Its subcellular location is the cytoplasm. It is found in the cell membrane. The protein localises to the nucleus membrane. The protein resides in the endoplasmic reticulum. The catalysed reaction is S-hexadecanoyl-L-cysteinyl-[protein] + H2O = L-cysteinyl-[protein] + hexadecanoate + H(+). It catalyses the reaction 1-hexadecanoyl-sn-glycero-3-phosphocholine + H2O = sn-glycerol 3-phosphocholine + hexadecanoate + H(+). The enzyme catalyses a 1-(9Z-octadecenoyl)-2-acyl-sn-glycero-3-phosphocholine + H2O = a 2-acyl-sn-glycero-3-phosphocholine + (9Z)-octadecenoate + H(+). Functionally, acts as an acyl-protein thioesterase. Hydrolyzes fatty acids from S-acylated cysteine residues in proteins such as trimeric G alpha proteins or HRAS. Acts as a palmitoyl thioesterase that catalyzes depalmitoylation of proteins, such as ADRB2, KCNMA1 and SQSTM1. Acts as a negative regulator of autophagy by mediating palmitoylation of SQSTM1, decreasing affinity between SQSTM1 and ATG8 proteins and recruitment of ubiquitinated cargo proteins to autophagosomes. Acts as a lysophospholipase and hydrolyzes lysophosphatidylcholine (lyso-PC). Also hydrolyzes lysophosphatidylethanolamine (lyso-PE), lysophosphatidylinositol (lyso-PI) and lysophosphatidylserine (lyso-PS). Has much higher thioesterase activity than lysophospholipase activity. Contributes to the production of lysophosphatidic acid (LPA) during blood coagulation by recognizing and cleaving plasma phospholipids to generate lysophospholipids which in turn act as substrates for ENPP2 to produce LPA. The protein is Acyl-protein thioesterase 1 (Lypla1) of Mus musculus (Mouse).